A 440-amino-acid chain; its full sequence is FAD-dependent monooxygenase FVEG_08293 (440 aa).

Residues Glu7–Leu26 traverse the membrane as a helical segment. Residues Glu37 and Gly50 each coordinate FAD. An N-linked (GlcNAc...) asparagine glycan is attached at Asn77. Arg122 is a binding site for FAD. Catalysis depends on residues Arg203 and Tyr235. Residues Asp317 and Ala330 each coordinate FAD.

Belongs to the paxM FAD-dependent monooxygenase family. Requires FAD as cofactor.

It localises to the membrane. Its function is as follows. FAD-dependent monooxygenase; part of the Fusarium detoxification of benzoxazolinone cluster 1 (FDB1) involved in the degradation of benzoxazolinones produced by the host plant. Maize, wheat, and rye produce the 2 benzoxazinone phytoanticipins 2,4-dihy-droxy-7-methoxy-1,4-benzoxazin-3-one (DIMBOA) and 2,4-dihydroxy-1,4-benzoxazin-3-one (DIBOA) that, due to their inherent instability once released, spontaneously degrade to the more stable corresponding benzoxazolinones, 6-methoxy-2-benzoxazolinone (MBOA) and 2-benzoxazolinone (BOA), respectively. The first step in the detoxification of benzoxazolinones involves the hydrolysis of the cyclic ester bond of benzoxazolinones by the FDB1 cluster gamma-lactamase MBL1 to aminophenols. MBL1 is able to convert BOA into 2-aminophenol (2-AP), as well as MBOA into 5-methoxy-2-aminophenol (2-AMP). The FDB2 cluster N-malonyltransferase FDB2/NAT1 then metabolizes aminophenols via N-malonylation to non-toxic malonamic acids. FDB2/NAT1 converts 2-AP into N-(2-hydroxyphenyl) malonamic acid (HPMA) and 2-AMP into N-(2-hydroxy-4-methoxyphenyl) malonamic acid (HMPMA). The duplicated dienlactone hydrolases DLH1 and DLH2 may provide redundant function for hydrolyzing the lactone moiety in the BOA molecule. The roles of the amidases an other enzymes encoded by the 2 FDB clusters have not been identified so far. The protein is FAD-dependent monooxygenase FVEG_08293 of Gibberella moniliformis (strain M3125 / FGSC 7600) (Maize ear and stalk rot fungus).